We begin with the raw amino-acid sequence, 396 residues long: L-lactate dehydrogenase (396 aa).

Residues 1-380 form the FMN hydroxy acid dehydrogenase domain; the sequence is MIISAASDYR…SGDSLVQELG (380 aa). Tyrosine 24 provides a ligand contact to substrate. FMN is bound by residues serine 106 and glutamine 127. Tyrosine 129 provides a ligand contact to substrate. Threonine 155 provides a ligand contact to FMN. Arginine 164 is a binding site for substrate. An FMN-binding site is contributed by lysine 251. The Proton acceptor role is filled by histidine 275. Arginine 278 is a substrate binding site. 306-330 is a binding site for FMN; sequence DSGIRNGLDVVRMIALGADTVLLGR.

This sequence belongs to the FMN-dependent alpha-hydroxy acid dehydrogenase family. FMN serves as cofactor.

It is found in the cell inner membrane. The enzyme catalyses (S)-lactate + A = pyruvate + AH2. Its function is as follows. Catalyzes the conversion of L-lactate to pyruvate. Is coupled to the respiratory chain. This is L-lactate dehydrogenase from Salmonella heidelberg (strain SL476).